The chain runs to 542 residues: GPI alpha-1,2-mannosyltransferase 3 (542 aa).

The interval 1 to 36 (MESQAADYNPASRNLHGSSGEMKLRRRKSRQYVSAQ) is disordered. Transmembrane regions (helical) follow at residues 52–72 (LVLF…TSFV), 125–145 (VQFL…VADI), 213–233 (LVAL…PLLF), 244–264 (HLTL…SLII), 304–324 (GFPV…FLAP), 327–347 (LHIL…LGHK), 351–371 (FIYP…AHLK), and 376–396 (AALS…GLVH). The N-linked (GlcNAc...) asparagine glycan is linked to Asn-480.

Belongs to the glycosyltransferase 22 family. PIGB subfamily.

Its subcellular location is the endoplasmic reticulum membrane. It functions in the pathway glycolipid biosynthesis; glycosylphosphatidylinositol-anchor biosynthesis. Functionally, alpha-1,2-mannosyltransferase that catalyzes the transfer of the third mannose, via an alpha-1,2 bond, from a dolichol-phosphate-mannose (Dol-P-Man) to an alpha-D-Man-(1-&gt;6)-2-PEtn-alpha-D-Man-(1-&gt;4)-alpha-D-GlcN-(1-&gt;6)-(1-radyl,2-acyl-sn-glycero-3-phospho)-2-acyl-inositol intermediate to generate an alpha-D-Man-(1-&gt;2)-alpha-D-Man-(1-&gt;6)-2-PEtn-alpha-D-Man-(1-&gt;4)-alpha-D-GlcN-(1-&gt;6)-(1-radyl,2-acyl-sn-glycero-3-phospho)-2-acyl-inositol (also termed H6) and participates in the nineth step of the glycosylphosphatidylinositol-anchor biosynthesis. May also add the third mannose to an alpha-D-Man-(1-&gt;6)-alpha-D-Man-(1-&gt;4)-alpha-D-GlcN-(1-&gt;6)-(1-radyl,2-acyl-sn-glycero-3-phospho)-2-acyl-inositol (also termed H3) intermediate generating an alpha-D-Man-(1-&gt;2)-alpha-D-Man-(1-&gt;6)-alpha-D-Man-(1-&gt;4)-alpha-D-GlcN-(1-&gt;6)-(1-radyl,2-acyl-sn-glycero-3-phospho)-2-acyl-inositol (also termed H4). The protein is GPI alpha-1,2-mannosyltransferase 3 of Mus musculus (Mouse).